The primary structure comprises 225 residues: 2-C-methyl-D-erythritol 4-phosphate cytidylyltransferase (225 aa).

It belongs to the IspD/TarI cytidylyltransferase family. IspD subfamily.

The catalysed reaction is 2-C-methyl-D-erythritol 4-phosphate + CTP + H(+) = 4-CDP-2-C-methyl-D-erythritol + diphosphate. The protein operates within isoprenoid biosynthesis; isopentenyl diphosphate biosynthesis via DXP pathway; isopentenyl diphosphate from 1-deoxy-D-xylulose 5-phosphate: step 2/6. Functionally, catalyzes the formation of 4-diphosphocytidyl-2-C-methyl-D-erythritol from CTP and 2-C-methyl-D-erythritol 4-phosphate (MEP). The protein is 2-C-methyl-D-erythritol 4-phosphate cytidylyltransferase of Haemophilus influenzae (strain 86-028NP).